Here is a 179-residue protein sequence, read N- to C-terminus: uncharacterized protein (179 aa).

2 disordered regions span residues L26–D103 and K136–N179. The segment covering Q34 to R61 has biased composition (basic and acidic residues). Residues A63–N79 are compositionally biased toward low complexity. Basic and acidic residues-rich tracts occupy residues A82–D103 and G158–N179.

This is an uncharacterized protein from Escherichia coli (strain K12).